Reading from the N-terminus, the 565-residue chain is Periplasmic trehalase (565 aa).

The N-terminal stretch at 1 to 30 (MKSPAPSRPQKMALIPACIFLCFAALSVQA) is a signal peptide. Substrate is bound by residues arginine 152, 159-160 (WD), asparagine 196, 205-207 (RSQ), 277-279 (RPE), and glycine 310. Active-site proton donor/acceptor residues include aspartate 312 and glutamate 496. Glutamate 511 contributes to the substrate binding site. A disordered region spans residues 538–565 (PCDNVPATRPTVKSATTQPSTKEAQPTP). Over residues 548–565 (TVKSATTQPSTKEAQPTP) the composition is skewed to polar residues.

The protein belongs to the glycosyl hydrolase 37 family. In terms of assembly, monomer.

It localises to the periplasm. It catalyses the reaction alpha,alpha-trehalose + H2O = alpha-D-glucose + beta-D-glucose. Functionally, provides the cells with the ability to utilize trehalose at high osmolarity by splitting it into glucose molecules that can subsequently be taken up by the phosphotransferase-mediated uptake system. This Escherichia coli O8 (strain IAI1) protein is Periplasmic trehalase.